The primary structure comprises 550 residues: DNA-directed RNA polymerase subunit alpha (550 aa).

The interval 1–333 (MTIYPNLKKI…QENNLFRSEK (333 aa)) is alpha N-terminal domain (alpha-NTD). Residues 185–258 (TTLKKRNILL…TSLGHDTVSN (74 aa)) are insert. The segment at 378–550 (FLNQSLGQNK…SLTFEYARKF (173 aa)) is alpha C-terminal domain (alpha-CTD).

It belongs to the RNA polymerase alpha chain family. As to quaternary structure, in plastids the minimal PEP RNA polymerase catalytic core is composed of four subunits: alpha, beta, beta', and beta''. When a (nuclear-encoded) sigma factor is associated with the core the holoenzyme is formed, which can initiate transcription.

The protein resides in the plastid. Its subcellular location is the chloroplast. It catalyses the reaction RNA(n) + a ribonucleoside 5'-triphosphate = RNA(n+1) + diphosphate. Its function is as follows. DNA-dependent RNA polymerase catalyzes the transcription of DNA into RNA using the four ribonucleoside triphosphates as substrates. The protein is DNA-directed RNA polymerase subunit alpha (rpoA) of Chlamydomonas reinhardtii (Chlamydomonas smithii).